The chain runs to 161 residues: Probable endopeptidase HI_1314 (161 aa).

The signal sequence occupies residues 1–18 (MKVYKSFLIATASLFLFA). C19 carries the N-palmitoyl cysteine lipid modification. C19 is lipidated: S-diacylglycerol cysteine. The NlpC/P60 domain occupies 39 to 161 (IMAIAMLSEQ…SKAFWQVRRI (123 aa)). C69 serves as the catalytic Nucleophile. H122 acts as the Proton acceptor in catalysis. Residue H134 is part of the active site.

It belongs to the peptidase C40 family.

It is found in the cell membrane. The protein is Probable endopeptidase HI_1314 of Haemophilus influenzae (strain ATCC 51907 / DSM 11121 / KW20 / Rd).